We begin with the raw amino-acid sequence, 429 residues long: Glutamyl-tRNA reductase (429 aa).

Residues 49 to 52 (TCNR), serine 108, 113 to 115 (EAQ), and glutamine 119 contribute to the substrate site. The active-site Nucleophile is the cysteine 50. 188 to 193 (GAGEMS) is a binding site for NADP(+).

This sequence belongs to the glutamyl-tRNA reductase family. As to quaternary structure, homodimer.

The enzyme catalyses (S)-4-amino-5-oxopentanoate + tRNA(Glu) + NADP(+) = L-glutamyl-tRNA(Glu) + NADPH + H(+). It functions in the pathway porphyrin-containing compound metabolism; protoporphyrin-IX biosynthesis; 5-aminolevulinate from L-glutamyl-tRNA(Glu): step 1/2. In terms of biological role, catalyzes the NADPH-dependent reduction of glutamyl-tRNA(Glu) to glutamate 1-semialdehyde (GSA). The sequence is that of Glutamyl-tRNA reductase from Rubrobacter xylanophilus (strain DSM 9941 / JCM 11954 / NBRC 16129 / PRD-1).